A 325-amino-acid chain; its full sequence is Thioredoxin reductase (325 aa).

FAD-binding positions include 10–13 (SGPS), 39–40 (IA), Gln44, Asn53, Val86, Cys143, Asp286, and 293–295 (RQA). Cys140 and Cys143 are disulfide-bonded.

It belongs to the class-II pyridine nucleotide-disulfide oxidoreductase family. Homodimer. FAD serves as cofactor.

It is found in the cytoplasm. It catalyses the reaction [thioredoxin]-dithiol + NADP(+) = [thioredoxin]-disulfide + NADPH + H(+). The sequence is that of Thioredoxin reductase (TRR1) from Pneumocystis carinii.